The primary structure comprises 158 residues: Acetolactate synthase small subunit (158 aa).

An ACT domain is found at 4–78; that stretch reads ILSVLLENES…DVLRVIKVGQ (75 aa).

This sequence belongs to the acetolactate synthase small subunit family. Dimer of large and small chains.

The enzyme catalyses 2 pyruvate + H(+) = (2S)-2-acetolactate + CO2. It functions in the pathway amino-acid biosynthesis; L-isoleucine biosynthesis; L-isoleucine from 2-oxobutanoate: step 1/4. The protein operates within amino-acid biosynthesis; L-valine biosynthesis; L-valine from pyruvate: step 1/4. The protein is Acetolactate synthase small subunit (ilvH) of Buchnera aphidicola subsp. Schizaphis graminum (strain Sg).